A 135-amino-acid chain; its full sequence is Small ribosomal subunit protein uS12 (135 aa).

Residue aspartate 89 is modified to 3-methylthioaspartic acid. The segment at 101 to 135 is disordered; the sequence is SLDTSGVADRKQSRSKYGAKQPKAGAAAPAKGKGR. The span at 118–135 shows a compositional bias: low complexity; that stretch reads GAKQPKAGAAAPAKGKGR.

This sequence belongs to the universal ribosomal protein uS12 family. In terms of assembly, part of the 30S ribosomal subunit. Contacts proteins S8 and S17. May interact with IF1 in the 30S initiation complex.

With S4 and S5 plays an important role in translational accuracy. In terms of biological role, interacts with and stabilizes bases of the 16S rRNA that are involved in tRNA selection in the A site and with the mRNA backbone. Located at the interface of the 30S and 50S subunits, it traverses the body of the 30S subunit contacting proteins on the other side and probably holding the rRNA structure together. The combined cluster of proteins S8, S12 and S17 appears to hold together the shoulder and platform of the 30S subunit. The chain is Small ribosomal subunit protein uS12 from Chlorobium limicola (strain DSM 245 / NBRC 103803 / 6330).